The following is a 384-amino-acid chain: Substance-K receptor (384 aa).

Residues 1-32 (MGGRAIVTDTNIFSGLESNTTGVTAFSMPAWQ) lie on the Extracellular side of the membrane. N-linked (GlcNAc...) asparagine glycosylation is present at Asn-19. The chain crosses the membrane as a helical span at residues 33 to 56 (LALWATAYLGLVLVAVTGNATVIW). At 57-69 (IILAHERMRTVTN) the chain is on the cytoplasmic side. The helical transmembrane segment at 70-90 (YFIINLALADLCMAAFNATFN) threads the bilayer. At 91 to 107 (FVYASHNIWYFGRAFCY) the chain is on the extracellular side. A disulfide bridge connects residues Cys-106 and Cys-181. The chain crosses the membrane as a helical span at residues 108–129 (FQNLFPITAMFVSIYSMTAIAA). Over 130–149 (DRYMAIVHPFQPRLSAPITK) the chain is Cytoplasmic. Residues 150–170 (ATIAGIWLVALALASPQCFYS) traverse the membrane as a helical segment. Topologically, residues 171 to 196 (TITVDQGATKCVVAWPNDNGGKMLLL) are extracellular. A helical membrane pass occupies residues 197 to 218 (YHLVVFVLVYFLPLVVMFVAYS). Topologically, residues 219-251 (VIGLTLWKRAVPRHQAHGANLRHLHAKKKFVKA) are cytoplasmic. The helical transmembrane segment at 252-272 (MVLVVLTFAICWLPYHLYFIL) threads the bilayer. The Extracellular segment spans residues 273–290 (GSFQKDIYYRKFIQQVYL). The chain crosses the membrane as a helical span at residues 291 to 310 (ALFWLAMSSTMYNPIIYCCL). At 311 to 384 (NHRFRSGFRL…SPQDVEPAAP (74 aa)) the chain is on the cytoplasmic side. A lipid anchor (S-palmitoyl cysteine) is attached at Cys-324.

This sequence belongs to the G-protein coupled receptor 1 family.

The protein localises to the cell membrane. This is a receptor for the tachykinin neuropeptide substance K (neurokinin A). It is associated with G proteins that activate a phosphatidylinositol-calcium second messenger system. The rank order of affinity of this receptor to tachykinins is: substance K &gt; neuromedin-K &gt; substance P. The polypeptide is Substance-K receptor (TACR2) (Mesocricetus auratus (Golden hamster)).